Here is a 485-residue protein sequence, read N- to C-terminus: AP2-like ethylene-responsive transcription factor TOE2 (485 aa).

A compositionally biased stretch (gly residues) spans 124–135; it reads GDFIGSGSGGGD. Positions 124–161 are disordered; that stretch reads GDFIGSGSGGGDASRVMQPPSQPVKKSRRGPRSKSSQY. Residues 160 to 216 constitute a DNA-binding region (AP2/ERF); it reads QYRGVTFYRRTGRWESHIWDCGKQVYLGGFDTAHAAARAYDRAAVKFRGLEADINFV.

The protein belongs to the AP2/ERF transcription factor family. AP2 subfamily.

The protein localises to the nucleus. In terms of biological role, probably acts as a transcriptional activator. Binds to the GCC-box pathogenesis-related promoter element. May be involved in the regulation of gene expression by stress factors and by components of stress signal transduction pathways. Regulates negatively the transition to flowering time and confers flowering time delay. This chain is AP2-like ethylene-responsive transcription factor TOE2 (TOE2), found in Arabidopsis thaliana (Mouse-ear cress).